Here is a 227-residue protein sequence, read N- to C-terminus: 7-cyano-7-deazaguanine synthase (227 aa).

8-18 lines the ATP pocket; that stretch reads VSGGADSATVL. Zn(2+) contacts are provided by cysteine 192, cysteine 202, cysteine 205, and cysteine 208.

Belongs to the QueC family. Zn(2+) is required as a cofactor.

The enzyme catalyses 7-carboxy-7-deazaguanine + NH4(+) + ATP = 7-cyano-7-deazaguanine + ADP + phosphate + H2O + H(+). It functions in the pathway purine metabolism; 7-cyano-7-deazaguanine biosynthesis. In terms of biological role, catalyzes the ATP-dependent conversion of 7-carboxy-7-deazaguanine (CDG) to 7-cyano-7-deazaguanine (preQ(0)). The sequence is that of 7-cyano-7-deazaguanine synthase from Rickettsia canadensis (strain McKiel).